A 562-amino-acid polypeptide reads, in one-letter code: Sulfite reductase [NADPH] hemoprotein beta-component (562 aa).

[4Fe-4S] cluster contacts are provided by C425, C431, C470, and C474. C474 contacts siroheme.

Belongs to the nitrite and sulfite reductase 4Fe-4S domain family. In terms of assembly, alpha(8)-beta(8). The alpha component is a flavoprotein, the beta component is a hemoprotein. Siroheme serves as cofactor. [4Fe-4S] cluster is required as a cofactor.

It catalyses the reaction hydrogen sulfide + 3 NADP(+) + 3 H2O = sulfite + 3 NADPH + 4 H(+). It participates in sulfur metabolism; hydrogen sulfide biosynthesis; hydrogen sulfide from sulfite (NADPH route): step 1/1. In terms of biological role, component of the sulfite reductase complex that catalyzes the 6-electron reduction of sulfite to sulfide. This is one of several activities required for the biosynthesis of L-cysteine from sulfate. The sequence is that of Sulfite reductase [NADPH] hemoprotein beta-component from Tolumonas auensis (strain DSM 9187 / NBRC 110442 / TA 4).